The following is a 270-amino-acid chain: Pyrroline-5-carboxylate reductase (270 aa).

It belongs to the pyrroline-5-carboxylate reductase family.

The protein localises to the cytoplasm. It carries out the reaction L-proline + NADP(+) = (S)-1-pyrroline-5-carboxylate + NADPH + 2 H(+). The enzyme catalyses L-proline + NAD(+) = (S)-1-pyrroline-5-carboxylate + NADH + 2 H(+). It functions in the pathway amino-acid biosynthesis; L-proline biosynthesis; L-proline from L-glutamate 5-semialdehyde: step 1/1. In terms of biological role, catalyzes the reduction of 1-pyrroline-5-carboxylate (PCA) to L-proline. This Corynebacterium melassecola protein is Pyrroline-5-carboxylate reductase.